A 578-amino-acid polypeptide reads, in one-letter code: Zinc finger protein with KRAB and SCAN domains 8 (578 aa).

A disordered region spans residues 1–20 (MAEESRKPSAPSPPDQTPEE). At serine 12 the chain carries Phosphoserine. A Glycyl lysine isopeptide (Lys-Gly) (interchain with G-Cter in SUMO2) cross-link involves residue lysine 26. In terms of domain architecture, SCAN box spans 51–133 (RLRFRQLCYQ…TLLEDLERQI (83 aa)). The segment at 158–205 (ASAPEPPNTQLQSEATQHKSPVPQESQERAMSTSQSPTRSQKGSSGDQ) is disordered. Over residues 165-205 (NTQLQSEATQHKSPVPQESQERAMSTSQSPTRSQKGSSGDQ) the composition is skewed to polar residues. Residues lysine 176 and lysine 199 each participate in a glycyl lysine isopeptide (Lys-Gly) (interchain with G-Cter in SUMO2) cross-link. At serine 201 the chain carries Phosphoserine. Residues 220–316 (EKIEDMAVSL…GRLERQRGNP (97 aa)) form the KRAB domain. Residues lysine 221, lysine 272, and lysine 288 each participate in a glycyl lysine isopeptide (Lys-Gly) (interchain with G-Cter in SUMO2) cross-link. 2 C2H2-type zinc fingers span residues 322 to 344 (HKCDECGKSFAQSSGLVRHWRIH) and 350 to 372 (YQCNVCGKAFSYRSALLSHQDIH). Residues lysine 374 and lysine 376 each participate in a glycyl lysine isopeptide (Lys-Gly) (interchain with G-Cter in SUMO2) cross-link. 7 consecutive C2H2-type zinc fingers follow at residues 378-400 (YHCKECGKAFSQNTGLILHQRIH), 406-428 (YQCNQCGKAFSQSAGLILHQRIH), 434-456 (YECNECGKAFSHSSHLIGHQRIH), 462-484 (YECDECGKTFRRSSHLIGHQRSH), 490-512 (YKCNECGRAFSQKSGLIEHQRIH), 518-540 (YKCKECGKAFNGNTGLIQHLRIH), and 546-568 (YQCNECGKAFIQRSSLIRHQRIH). Residues lysine 413 and lysine 441 each participate in a glycyl lysine isopeptide (Lys-Gly) (interchain with G-Cter in SUMO2) cross-link. Residue lysine 502 forms a Glycyl lysine isopeptide (Lys-Gly) (interchain with G-Cter in SUMO2) linkage. Lysine 572 is covalently cross-linked (Glycyl lysine isopeptide (Lys-Gly) (interchain with G-Cter in SUMO2)).

Belongs to the krueppel C2H2-type zinc-finger protein family.

The protein localises to the nucleus. May be involved in transcriptional regulation. The polypeptide is Zinc finger protein with KRAB and SCAN domains 8 (ZKSCAN8) (Pan troglodytes (Chimpanzee)).